Here is a 371-residue protein sequence, read N- to C-terminus: Geranylgeranyl transferase type-2 subunit alpha (371 aa).

PFTA repeat units follow at residues 45–79 (YSDE…NNYS), 92–126 (ILNQ…ELVK), 131–165 (NWKY…NMEL), 177–211 (INLD…KIYN), and 242–276 (LLKN…DDLF).

It belongs to the protein prenyltransferase subunit alpha family. In terms of assembly, heterodimer of an alpha and a beta subunit.

The catalysed reaction is geranylgeranyl diphosphate + L-cysteinyl-[protein] = S-geranylgeranyl-L-cysteinyl-[protein] + diphosphate. In terms of biological role, catalyzes the transfer of a geranyl-geranyl moiety from geranyl-geranyl pyrophosphate to proteins having the C-terminal -XCC or -XCXC, where both cysteines may become modified. Acts on YPT1 and SEC4. In Candida albicans (Yeast), this protein is Geranylgeranyl transferase type-2 subunit alpha (BET4).